A 197-amino-acid polypeptide reads, in one-letter code: RILP-like protein 2 (197 aa).

The RH1 domain occupies Glu14–Ala96. Residues Leu65 to Ser153 are a coiled coil. An RH2 domain is found at Arg119 to Ile184.

As to quaternary structure, homodimer. Interacts (via N-terminus) with MYO5A, the interaction is required for its role in dendrite formation. Interacts with RAC1. Interacts with RAB8A; interaction is dependent on the phosphorylation of RAB8A on 'Thr-72'. Interacts with RAB10 and RAB12; interaction is dependent on the phosphorylation of 'Thr-73' on RAB10 and 'Ser-105' on RAB12.

The protein resides in the cytoplasm. It localises to the cytosol. It is found in the cytoskeleton. The protein localises to the microtubule organizing center. Its subcellular location is the centrosome. The protein resides in the cell projection. It localises to the cilium. Involved in cell shape and neuronal morphogenesis, positively regulating the establishment and maintenance of dendritic spines. Plays a role in cellular protein transport, including protein transport away from primary cilia. May function via activation of RAC1 and PAK1. The sequence is that of RILP-like protein 2 (Rilpl2) from Rattus norvegicus (Rat).